We begin with the raw amino-acid sequence, 144 residues long: Large ribosomal subunit protein uL15 (144 aa).

Residues 1 to 16 (MVVRKEKKSRKYRGYR) are compositionally biased toward basic residues. Residues 1-35 (MVVRKEKKSRKYRGYRTHGWGTKGQHRDRGAQGGR) are disordered.

The protein belongs to the universal ribosomal protein uL15 family. Part of the 50S ribosomal subunit.

Binds to the 23S rRNA. This Sulfolobus acidocaldarius (strain ATCC 33909 / DSM 639 / JCM 8929 / NBRC 15157 / NCIMB 11770) protein is Large ribosomal subunit protein uL15.